Here is a 490-residue protein sequence, read N- to C-terminus: MVTSPPTSSPSQRSYSPQDWLRGYQSQPQEWDYWVEDVEGSIPPDLQGTLYRNGPGLLEIGDRPLKHPFDGDGMVTAFKFPGDGRVHFQSKFVRTQGYVEEQKAGKMIYRGVFGSQPAGGWLKTIFDLRLKNIANTNITYWGDRLLALWEGGQPHRLEPSNLATIGLDDLGGILAEGQPLSAHPRIDPASTFDGGQPCYVTFSIKSSLSSTLTLLELDPQGKLLRQKTETFPGFAFIHDFAITPHYAIFLQNNVTLNGLPYLFGLRGAGECVQFHPDKPAQIILVPRDGGEIKRIPVQAGFVFHHANAFEENGKIILDSICYNSLPQVDTDGDFRSTNFDNLDPGQLWRFTIDPAAATVEKQLMVSRCCEFPVVHPQQVGRPYRYVYMGAAHHSTGNAPLQAILKVDLESGTETLRSFAPHGFAGEPIFVPRPGGVAEDDGWLLCLIYKADLHRSELVILDAQDITAPAIATLKLKHHIPYPLHGSWAQT.

H183 lines the Fe cation pocket. Residue S206 coordinates substrate. Fe cation is bound at residue H238. F303 contributes to the substrate binding site. Fe cation contacts are provided by H304 and H484.

It belongs to the carotenoid oxygenase family. Fe(2+) serves as cofactor.

The catalysed reaction is all-trans-8'-apo-beta-carotenal + O2 = (2E,4E,6E)-2,6-dimethylocta-2,4,6-trienedial + all-trans-retinal. Cleaves a number of carotenals and carotenols in the all-trans configuration at the 15-15' double bond producing retinal or retinol, respectively. Also shows activity toward lycopenals and the corresponding alcohols. Does not cleave beta-carotene or lycopene. The chain is Apocarotenoid-15,15'-oxygenase from Synechocystis sp. (strain ATCC 27184 / PCC 6803 / Kazusa).